Consider the following 217-residue polypeptide: Protein GrpE (217 aa).

The protein belongs to the GrpE family. Homodimer.

It is found in the cytoplasm. In terms of biological role, participates actively in the response to hyperosmotic and heat shock by preventing the aggregation of stress-denatured proteins, in association with DnaK and GrpE. It is the nucleotide exchange factor for DnaK and may function as a thermosensor. Unfolded proteins bind initially to DnaJ; upon interaction with the DnaJ-bound protein, DnaK hydrolyzes its bound ATP, resulting in the formation of a stable complex. GrpE releases ADP from DnaK; ATP binding to DnaK triggers the release of the substrate protein, thus completing the reaction cycle. Several rounds of ATP-dependent interactions between DnaJ, DnaK and GrpE are required for fully efficient folding. The protein is Protein GrpE of Mycoplasma genitalium (strain ATCC 33530 / DSM 19775 / NCTC 10195 / G37) (Mycoplasmoides genitalium).